Consider the following 203-residue polypeptide: Probable NADPH:quinone oxidoreductase 2 (203 aa).

Belongs to the SsuE family. As to quaternary structure, homotetramer. The cofactor is FMN.

The enzyme catalyses a quinone + NADH + H(+) = a quinol + NAD(+). It catalyses the reaction a quinone + NADPH + H(+) = a quinol + NADP(+). Functionally, the enzyme apparently serves as a quinone reductase in connection with conjugation reactions of hydroquinones involved in detoxification pathways. The protein is Probable NADPH:quinone oxidoreductase 2 of Oryza sativa subsp. japonica (Rice).